The chain runs to 744 residues: CCR4-NOT transcription complex subunit 10 (744 aa).

The span at 1–16 (MAADKAADQGAEKHDG) shows a compositional bias: basic and acidic residues. The segment at 1 to 25 (MAADKAADQGAEKHDGAGTSGITDQ) is disordered. The stretch at 72–106 (CKSNQTTTDNLRQTLNQLKNQVHSAVEEMDGLDDV) forms a coiled coil. Residues 182-198 (NNNSKNGKNESGNNTNK) are compositionally biased toward low complexity. Disordered stretches follow at residues 182–204 (NNNS…SNQK), 476–520 (QQEP…APPS), and 602–634 (VSLG…PQCY). Polar residues-rich tracts occupy residues 484 to 506 (GSKP…ACSN) and 602 to 612 (VSLGISSNEQD).

Belongs to the CNOT10 family. Component of the CCR4-NOT complex. CNOT10 and CNOT11 form a subcomplex docked to the CNOT1 scaffold.

The protein localises to the cytoplasm. The protein resides in the nucleus. Functionally, component of the CCR4-NOT complex which is one of the major cellular mRNA deadenylases and is linked to various cellular processes including bulk mRNA degradation, miRNA-mediated repression, translational repression during translational initiation and general transcription regulation. Additional complex functions may be a consequence of its influence on mRNA expression. Is not required for association of CNOT7 to the CCR4-NOT complex. The protein is CCR4-NOT transcription complex subunit 10 (CNOT10) of Gallus gallus (Chicken).